A 301-amino-acid polypeptide reads, in one-letter code: Protoheme IX farnesyltransferase (301 aa).

9 consecutive transmembrane segments (helical) span residues 20-42 (FTELVKIGIVNSNTITAFTGMWL), 55-75 (VDVIFFTIVGSALIVAASGAF), 105-125 (ALMVALVLGVVGTIMLFMTTW), 126-146 (QAGVLGVIGVFLYVVVYSLYA), 150-172 (LVSNTVIGSFSGAVPPLIGWFAV), 176-198 (FSIVPIMLFLVMFCWQPPHFYAI), 227-247 (MFFWVILLTVLPFFMFDLGLV), 249-269 (VILATLLNIGWLALSIYGFKM), and 280-300 (FVYSLNYMTILFVAMVVISIF).

The protein belongs to the UbiA prenyltransferase family. Protoheme IX farnesyltransferase subfamily. As to quaternary structure, interacts with CtaA.

Its subcellular location is the cell membrane. The enzyme catalyses heme b + (2E,6E)-farnesyl diphosphate + H2O = Fe(II)-heme o + diphosphate. It functions in the pathway porphyrin-containing compound metabolism; heme O biosynthesis; heme O from protoheme: step 1/1. Its function is as follows. Converts heme B (protoheme IX) to heme O by substitution of the vinyl group on carbon 2 of heme B porphyrin ring with a hydroxyethyl farnesyl side group. This chain is Protoheme IX farnesyltransferase, found in Listeria innocua serovar 6a (strain ATCC BAA-680 / CLIP 11262).